Consider the following 349-residue polypeptide: UDP-N-acetylenolpyruvoylglucosamine reductase (349 aa).

One can recognise an FAD-binding PCMH-type domain in the interval 17–187 (VNESADLIIQ…TAITLRLNKQ (171 aa)). Residue Arg-163 is part of the active site. Ser-233 functions as the Proton donor in the catalytic mechanism. Glu-328 is an active-site residue.

The protein belongs to the MurB family. FAD is required as a cofactor.

Its subcellular location is the cytoplasm. The enzyme catalyses UDP-N-acetyl-alpha-D-muramate + NADP(+) = UDP-N-acetyl-3-O-(1-carboxyvinyl)-alpha-D-glucosamine + NADPH + H(+). Its pathway is cell wall biogenesis; peptidoglycan biosynthesis. Functionally, cell wall formation. In Aliivibrio fischeri (strain ATCC 700601 / ES114) (Vibrio fischeri), this protein is UDP-N-acetylenolpyruvoylglucosamine reductase.